Reading from the N-terminus, the 282-residue chain is Elongation factor Ts (282 aa).

Residues 80–83 (TDFV) are involved in Mg(2+) ion dislocation from EF-Tu.

This sequence belongs to the EF-Ts family.

It is found in the cytoplasm. In terms of biological role, associates with the EF-Tu.GDP complex and induces the exchange of GDP to GTP. It remains bound to the aminoacyl-tRNA.EF-Tu.GTP complex up to the GTP hydrolysis stage on the ribosome. This chain is Elongation factor Ts (tsf), found in Chlamydia pneumoniae (Chlamydophila pneumoniae).